Consider the following 206-residue polypeptide: Urease accessory protein UreG (206 aa).

12 to 19 provides a ligand contact to GTP; the sequence is GPVGSGKT.

Belongs to the SIMIBI class G3E GTPase family. UreG subfamily. Homodimer. UreD, UreF and UreG form a complex that acts as a GTP-hydrolysis-dependent molecular chaperone, activating the urease apoprotein by helping to assemble the nickel containing metallocenter of UreC. The UreE protein probably delivers the nickel.

Its subcellular location is the cytoplasm. In terms of biological role, facilitates the functional incorporation of the urease nickel metallocenter. This process requires GTP hydrolysis, probably effectuated by UreG. The sequence is that of Urease accessory protein UreG from Synechocystis sp. (strain ATCC 27184 / PCC 6803 / Kazusa).